A 240-amino-acid polypeptide reads, in one-letter code: Probable septum site-determining protein MinC (240 aa).

This sequence belongs to the MinC family. In terms of assembly, interacts with MinD and FtsZ.

Functionally, cell division inhibitor that blocks the formation of polar Z ring septums. Rapidly oscillates between the poles of the cell to destabilize FtsZ filaments that have formed before they mature into polar Z rings. Prevents FtsZ polymerization. In Acinetobacter baumannii (strain ACICU), this protein is Probable septum site-determining protein MinC.